A 136-amino-acid polypeptide reads, in one-letter code: Psoriasis susceptibility 1 candidate gene 2 protein (136 aa).

Positions methionine 1 to glycine 22 are cleaved as a signal peptide. Positions isoleucine 20–arginine 136 are disordered. Pro residues-rich tracts occupy residues proline 44–proline 69 and proline 84–proline 116. The segment covering valine 118–arginine 136 has biased composition (basic and acidic residues).

As to expression, expressed in skin. Also expressed in heart and skeletal muscle.

It localises to the secreted. This is Psoriasis susceptibility 1 candidate gene 2 protein (PSORS1C2) from Homo sapiens (Human).